Reading from the N-terminus, the 321-residue chain is Probable heme-iron transport system permease protein IsdF (321 aa).

9 consecutive transmembrane segments (helical) span residues 9-29 (LLFL…FVTG), 61-81 (ILIA…LQAA), 89-109 (ANII…MLFI), 114-134 (FYLP…IILL), 143-163 (VSMI…LEIL), 179-199 (IWSD…LTLL), 233-253 (VFLA…GIIV), 267-287 (LIPF…LLGR), and 294-314 (EIPA…YLIC).

Belongs to the binding-protein-dependent transport system permease family. FecCD subfamily.

Its subcellular location is the cell membrane. In terms of biological role, part of the binding-protein-dependent transport system for heme-iron. Responsible for the translocation of the substrate across the membrane. This Staphylococcus aureus (strain NCTC 8325 / PS 47) protein is Probable heme-iron transport system permease protein IsdF (isdF).